The following is a 125-amino-acid chain: Large ribosomal subunit protein bL12 (125 aa).

The protein belongs to the bacterial ribosomal protein bL12 family. In terms of assembly, homodimer. Part of the ribosomal stalk of the 50S ribosomal subunit. Forms a multimeric L10(L12)X complex, where L10 forms an elongated spine to which 2 to 4 L12 dimers bind in a sequential fashion. Binds GTP-bound translation factors.

In terms of biological role, forms part of the ribosomal stalk which helps the ribosome interact with GTP-bound translation factors. Is thus essential for accurate translation. The polypeptide is Large ribosomal subunit protein bL12 (Methylobacterium radiotolerans (strain ATCC 27329 / DSM 1819 / JCM 2831 / NBRC 15690 / NCIMB 10815 / 0-1)).